We begin with the raw amino-acid sequence, 872 residues long: C-mannosyltransferase dpy-19 homolog (872 aa).

9 helical membrane passes run 4–24 (PNLYVILSHALIGCGFFFLYV), 126–146 (FVWLMGGVTLLVLYLYGTLLS), 149–169 (IFGGIYGVISYLMFHSFVAKI), 179–199 (FAFPFIFLQMFYLCICIGRII), 211–231 (IFAMSLFTACALLSWQFSTFI), 257–277 (VLDYSLSHLLGHALAFVMSHG), 279–299 (SQLLLTWQLSISLFLFLITMV), 326–346 (FLMLTLLLASSVQTTLIELFN), and 399–419 (VKTMIVKPYCMYGVVMLAMFF). Residues 508–535 (KRLRAQINRNSVKQRKERAQETKEAATD) adopt a coiled-coil conformation. Residues 514–620 (INRNSVKQRK…RSSSRRSSVV (107 aa)) are disordered. A compositionally biased stretch (basic and acidic residues) spans 524 to 533 (ERAQETKEAA). Positions 541–551 (TEEEDKDPEAE) are enriched in acidic residues. Transmembrane regions (helical) follow at residues 627–647 (ILNMHYVYSFLQMLVFTLIGL) and 678–698 (NIFWSVSLAVFLLSMFDPGMV).

The protein belongs to the dpy-19 family.

It is found in the membrane. Probable C-mannosyltransferase that mediates C-mannosylation of tryptophan residues on target proteins. This Drosophila melanogaster (Fruit fly) protein is C-mannosyltransferase dpy-19 homolog.